Consider the following 294-residue polypeptide: 4-hydroxy-tetrahydrodipicolinate synthase (294 aa).

Residue T47 coordinates pyruvate. The active-site Proton donor/acceptor is the Y135. K163 acts as the Schiff-base intermediate with substrate in catalysis. V205 contacts pyruvate.

It belongs to the DapA family. As to quaternary structure, homotetramer; dimer of dimers.

It localises to the cytoplasm. It carries out the reaction L-aspartate 4-semialdehyde + pyruvate = (2S,4S)-4-hydroxy-2,3,4,5-tetrahydrodipicolinate + H2O + H(+). It participates in amino-acid biosynthesis; L-lysine biosynthesis via DAP pathway; (S)-tetrahydrodipicolinate from L-aspartate: step 3/4. Its function is as follows. Catalyzes the condensation of (S)-aspartate-beta-semialdehyde [(S)-ASA] and pyruvate to 4-hydroxy-tetrahydrodipicolinate (HTPA). The protein is 4-hydroxy-tetrahydrodipicolinate synthase of Rickettsia bellii (strain OSU 85-389).